We begin with the raw amino-acid sequence, 158 residues long: NAD(P)H-quinone oxidoreductase subunit J, chloroplastic (158 aa).

Belongs to the complex I 30 kDa subunit family. NDH is composed of at least 16 different subunits, 5 of which are encoded in the nucleus.

It localises to the plastid. Its subcellular location is the chloroplast thylakoid membrane. It catalyses the reaction a plastoquinone + NADH + (n+1) H(+)(in) = a plastoquinol + NAD(+) + n H(+)(out). It carries out the reaction a plastoquinone + NADPH + (n+1) H(+)(in) = a plastoquinol + NADP(+) + n H(+)(out). Functionally, NDH shuttles electrons from NAD(P)H:plastoquinone, via FMN and iron-sulfur (Fe-S) centers, to quinones in the photosynthetic chain and possibly in a chloroplast respiratory chain. The immediate electron acceptor for the enzyme in this species is believed to be plastoquinone. Couples the redox reaction to proton translocation, and thus conserves the redox energy in a proton gradient. In Olimarabidopsis pumila (Dwarf rocket), this protein is NAD(P)H-quinone oxidoreductase subunit J, chloroplastic.